The following is a 122-amino-acid chain: Large ribosomal subunit protein uL14c (122 aa).

This sequence belongs to the universal ribosomal protein uL14 family. As to quaternary structure, part of the 50S ribosomal subunit.

Its subcellular location is the plastid. It localises to the chloroplast. Binds to 23S rRNA. The sequence is that of Large ribosomal subunit protein uL14c from Mesostigma viride (Green alga).